The primary structure comprises 117 residues: Acylphosphatase (117 aa).

One can recognise an Acylphosphatase-like domain in the interval R31–Y117. Residues R46 and N64 contribute to the active site.

Belongs to the acylphosphatase family.

The catalysed reaction is an acyl phosphate + H2O = a carboxylate + phosphate + H(+). This Synechococcus sp. (strain CC9902) protein is Acylphosphatase (acyP).